Reading from the N-terminus, the 333-residue chain is Flap endonuclease 1 (333 aa).

The segment at 1-99 is N-domain; sequence MGVAIRDILA…ETINERREHR (99 aa). Residues D28, D81, E153, E155, D174, D176, and D235 each coordinate Mg(2+). The tract at residues 117–255 is I-domain; sequence EAYKQASASA…KTALKIVRNG (139 aa). Residues 325-333 are interaction with PCNA; that stretch reads TQKTLDAWF.

The protein belongs to the XPG/RAD2 endonuclease family. FEN1 subfamily. As to quaternary structure, interacts with PCNA. PCNA stimulates the nuclease activity without altering cleavage specificity. It depends on Mg(2+) as a cofactor.

Structure-specific nuclease with 5'-flap endonuclease and 5'-3' exonuclease activities involved in DNA replication and repair. During DNA replication, cleaves the 5'-overhanging flap structure that is generated by displacement synthesis when DNA polymerase encounters the 5'-end of a downstream Okazaki fragment. Binds the unpaired 3'-DNA end and kinks the DNA to facilitate 5' cleavage specificity. Cleaves one nucleotide into the double-stranded DNA from the junction in flap DNA, leaving a nick for ligation. Also involved in the base excision repair (BER) pathway. Acts as a genome stabilization factor that prevents flaps from equilibrating into structures that lead to duplications and deletions. Also possesses 5'-3' exonuclease activity on nicked or gapped double-stranded DNA. In Methanoculleus marisnigri (strain ATCC 35101 / DSM 1498 / JR1), this protein is Flap endonuclease 1.